The primary structure comprises 233 residues: Orotidine 5'-phosphate decarboxylase (233 aa).

Substrate-binding positions include D9, K31, 58–67 (DLKLHDIPNT), T120, R182, Q191, G211, and R212. The Proton donor role is filled by K60.

It belongs to the OMP decarboxylase family. Type 1 subfamily. As to quaternary structure, homodimer.

It carries out the reaction orotidine 5'-phosphate + H(+) = UMP + CO2. The protein operates within pyrimidine metabolism; UMP biosynthesis via de novo pathway; UMP from orotate: step 2/2. Functionally, catalyzes the decarboxylation of orotidine 5'-monophosphate (OMP) to uridine 5'-monophosphate (UMP). This is Orotidine 5'-phosphate decarboxylase from Listeria monocytogenes serotype 4a (strain HCC23).